A 1888-amino-acid polypeptide reads, in one-letter code: E3 ubiquitin-protein ligase UBR3 (1888 aa).

The tract at residues 1-24 (MAAAAAAAVGGQQPSQPELPAPGL) is disordered. The UBR-type zinc-finger motif lies at 118-189 (ALCGLVWTAN…ESGFCKRHQI (72 aa)). The disordered stretch occupies residues 339 to 362 (GQVDSSDEDDQDGSQGLGKRKRVK). Phosphoserine is present on residues S343 and S344. 2 helical membrane-spanning segments follow: residues 761-781 (MLEG…HLGM) and 919-939 (LLHC…ILMD). Disordered stretches follow at residues 1008-1028 (APEV…GSLQ) and 1164-1186 (VPPK…RQKA). A compositionally biased stretch (polar residues) spans 1016–1028 (PASTSSDNLGSLQ). Residues 1168–1199 (KVTAAEKKTLDKEERRQKARERQQKLLAEFAS) adopt a coiled-coil conformation. A compositionally biased stretch (basic and acidic residues) spans 1170-1186 (TAAEKKTLDKEERRQKA). Residue S1199 is modified to Phosphoserine. The segment at 1306–1364 (DSSCLLAVSIGWEGGVYVQTCGHTLHIDCHKSYMESLRNDQVLQGFSVDKGEFTCPLCR) adopts an RING-type; degenerate zinc-finger fold. The chain crosses the membrane as a helical span at residues 1806-1826 (QNCGAGTGIFLLINASVIIII).

It belongs to the E3 ubiquitin-protein ligase UBR1-like family. Interacts with UBE2A and UBE2B.

It localises to the membrane. The enzyme catalyses S-ubiquitinyl-[E2 ubiquitin-conjugating enzyme]-L-cysteine + [acceptor protein]-L-lysine = [E2 ubiquitin-conjugating enzyme]-L-cysteine + N(6)-ubiquitinyl-[acceptor protein]-L-lysine.. Its pathway is protein modification; protein ubiquitination. E3 ubiquitin-protein ligase which is a component of the N-end rule pathway. Does not bind to proteins bearing specific N-terminal residues that are destabilizing according to the N-end rule, leading to their ubiquitination and subsequent degradation. May play a role in Shh signaling by mediating the ubiquitination of Kif7. May be important for MYH9 function in certain tissues, possibly by regulating the ubiquitination of MYH9 and consequently affecting its interaction with MYO7A. In Homo sapiens (Human), this protein is E3 ubiquitin-protein ligase UBR3 (UBR3).